Here is a 307-residue protein sequence, read N- to C-terminus: 2-dehydropantoate 2-reductase (307 aa).

Residues 7 to 12, asparagine 102, and alanine 128 each bind NADP(+); that span reads GSGAMG. Position 102 (asparagine 102) interacts with substrate. Catalysis depends on lysine 184, which acts as the Proton donor. Positions 188, 192, and 255 each coordinate substrate. An NADP(+)-binding site is contributed by glutamate 268.

Belongs to the ketopantoate reductase family.

It localises to the cytoplasm. The enzyme catalyses (R)-pantoate + NADP(+) = 2-dehydropantoate + NADPH + H(+). It participates in cofactor biosynthesis; (R)-pantothenate biosynthesis; (R)-pantoate from 3-methyl-2-oxobutanoate: step 2/2. Its function is as follows. Catalyzes the NADPH-dependent reduction of ketopantoate into pantoic acid. This is 2-dehydropantoate 2-reductase (apbA) from Streptococcus pyogenes serotype M18 (strain MGAS8232).